A 431-amino-acid polypeptide reads, in one-letter code: Glutamate-1-semialdehyde 2,1-aminomutase (431 aa).

At lysine 269 the chain carries N6-(pyridoxal phosphate)lysine.

It belongs to the class-III pyridoxal-phosphate-dependent aminotransferase family. HemL subfamily. In terms of assembly, homodimer. Requires pyridoxal 5'-phosphate as cofactor.

The protein localises to the cytoplasm. It carries out the reaction (S)-4-amino-5-oxopentanoate = 5-aminolevulinate. It functions in the pathway porphyrin-containing compound metabolism; protoporphyrin-IX biosynthesis; 5-aminolevulinate from L-glutamyl-tRNA(Glu): step 2/2. Its pathway is porphyrin-containing compound metabolism; chlorophyll biosynthesis. This is Glutamate-1-semialdehyde 2,1-aminomutase from Pelodictyon phaeoclathratiforme (strain DSM 5477 / BU-1).